The following is a 309-amino-acid chain: MTTFLPIIFSSLVVVIFVIGNFANGFIALVNSIEWFKXQKISFADQILTALAVSRVGLLWVLLLNWYSTVLNPAFYSVEVRTTAYNVWAVTGHFSNWLATSLSIFYLLKIANFSNFIFLHLKRRVKSVILVMLLGPLLFLACQLFMINMKEIVRTKEYEGNMTWKIKLRSAVYLSDATVTTLGNLVPFTLTLLCFLLLICSLCKHLKKMQLHGKGSQDPSTKVHIKVLQTVISFLLLCAIYFLSIMISVWSFGSLKNKPVFMFCKAIRFSYPSIHPFILIWGNKKLKQTFLSVLRQVRYWVKGEKPSSP.

At 1-2 the chain is on the extracellular side; the sequence is MT. A helical transmembrane segment spans residues 3-23; sequence TFLPIIFSSLVVVIFVIGNFA. Topologically, residues 24–55 are cytoplasmic; it reads NGFIALVNSIEWFKXQKISFADQILTALAVSR. A helical membrane pass occupies residues 56-76; sequence VGLLWVLLLNWYSTVLNPAFY. Residues 77 to 100 lie on the Extracellular side of the membrane; it reads SVEVRTTAYNVWAVTGHFSNWLAT. The helical transmembrane segment at 101–121 threads the bilayer; the sequence is SLSIFYLLKIANFSNFIFLHL. Residues 122 to 126 lie on the Cytoplasmic side of the membrane; sequence KRRVK. The helical transmembrane segment at 127–147 threads the bilayer; the sequence is SVILVMLLGPLLFLACQLFMI. Over 148 to 181 the chain is Extracellular; the sequence is NMKEIVRTKEYEGNMTWKIKLRSAVYLSDATVTT. Asparagine 161 is a glycosylation site (N-linked (GlcNAc...) asparagine). A helical transmembrane segment spans residues 182–202; sequence LGNLVPFTLTLLCFLLLICSL. Topologically, residues 203-229 are cytoplasmic; it reads CKHLKKMQLHGKGSQDPSTKVHIKVLQ. A helical membrane pass occupies residues 230–250; it reads TVISFLLLCAIYFLSIMISVW. The Extracellular portion of the chain corresponds to 251–259; sequence SFGSLKNKP. The helical transmembrane segment at 260 to 280 threads the bilayer; the sequence is VFMFCKAIRFSYPSIHPFILI. The Cytoplasmic portion of the chain corresponds to 281-309; sequence WGNKKLKQTFLSVLRQVRYWVKGEKPSSP.

It belongs to the G-protein coupled receptor T2R family.

The protein localises to the membrane. Functionally, receptor that may play a role in the perception of bitterness and is gustducin-linked. May play a role in sensing the chemical composition of the gastrointestinal content. The activity of this receptor may stimulate alpha gustducin, mediate PLC-beta-2 activation and lead to the gating of TRPM5. In Pan paniscus (Pygmy chimpanzee), this protein is Taste receptor type 2 member 31 (TAS2R31).